Reading from the N-terminus, the 308-residue chain is Mycothiol acetyltransferase (308 aa).

N-acetyltransferase domains follow at residues 12–149 and 165–308; these read DVLD…RPLG and VTVR…RTET. Glu-43 provides a ligand contact to 1D-myo-inositol 2-(L-cysteinylamino)-2-deoxy-alpha-D-glucopyranoside. Residue 88–90 participates in acetyl-CoA binding; sequence LVV. Glu-192, Lys-231, and Glu-240 together coordinate 1D-myo-inositol 2-(L-cysteinylamino)-2-deoxy-alpha-D-glucopyranoside. Residues 244-246 and 251-257 contribute to the acetyl-CoA site; these read VGV and QGGGLGR. 1D-myo-inositol 2-(L-cysteinylamino)-2-deoxy-alpha-D-glucopyranoside is bound at residue Tyr-278.

The protein belongs to the acetyltransferase family. MshD subfamily. As to quaternary structure, monomer.

The enzyme catalyses 1D-myo-inositol 2-(L-cysteinylamino)-2-deoxy-alpha-D-glucopyranoside + acetyl-CoA = mycothiol + CoA + H(+). Functionally, catalyzes the transfer of acetyl from acetyl-CoA to desacetylmycothiol (Cys-GlcN-Ins) to form mycothiol. In Streptomyces bingchenggensis (strain BCW-1), this protein is Mycothiol acetyltransferase.